The chain runs to 758 residues: Protein hunchback (758 aa).

Disordered stretches follow at residues 30 to 51 (EPGH…PIPS) and 172 to 214 (EKLQ…EDMK). Positions 39 to 51 (SVASSPRQSPIPS) are enriched in polar residues. Position 178 is a phosphothreonine (Thr-178). Ser-188, Ser-207, Ser-209, and Ser-210 each carry phosphoserine. Residues 198–214 (EPEKEHDQMSNSSEDMK) show a composition bias toward basic and acidic residues. 4 C2H2-type zinc fingers span residues 240–262 (YKCK…TRTH), 269–291 (LQCP…IRKH), 297–319 (FQCD…RKSH), and 325–349 (YRCA…KYGH). Disordered stretches follow at residues 365–416 (LVID…PVAT) and 513–536 (QLQQ…YERK). Low complexity-rich tracts occupy residues 398–415 (VAAV…QPVA) and 513–522 (QLQQQNQQQS). Residues 523 to 532 (DNEEEEQDDE) show a composition bias toward acidic residues. Ser-537 and Ser-540 each carry phosphoserine. A disordered region spans residues 603–695 (MTSPEQLKVP…TTSAVAAPPS (93 aa)). Residues 652-695 (ANTSASSTASSSGNSSNASSNSNGNSSSNSSSNGTTSAVAAPPS) are compositionally biased toward low complexity. 2 consecutive C2H2-type zinc fingers follow at residues 705-727 (YECK…MGYH) and 733-757 (FKCN…RNAH).

Belongs to the hunchback C2H2-type zinc-finger protein family. In embryo, expression of maternal transcript is highest in anterior region. Zygotic transcript is expressed in anterior region until the beginning of gastrulation and in posterior region until early gastrulation. After this, it is expressed in developing nervous system.

Its subcellular location is the nucleus. Functionally, gap class segmentation protein that controls development of head structures. This is Protein hunchback from Drosophila melanogaster (Fruit fly).